The primary structure comprises 461 residues: Alcaligin biosynthesis enzyme (461 aa).

Position 9–15 (9–15) interacts with FAD; it reads VAIGIGP.

The protein belongs to the lysine N(6)-hydroxylase/L-ornithine N(5)-oxygenase family. The cofactor is FAD.

It functions in the pathway siderophore biosynthesis; alcaligin biosynthesis. This is Alcaligin biosynthesis enzyme (alcA) from Bordetella parapertussis (strain 12822 / ATCC BAA-587 / NCTC 13253).